The following is a 372-amino-acid chain: 3,5-dihydroxyphenylacetyl-CoA synthase (372 aa).

Residue Cys160 is part of the active site.

This sequence belongs to the thiolase-like superfamily. Chalcone/stilbene synthases family.

The enzyme catalyses 4 malonyl-CoA + 4 H(+) = (3,5-dihydroxyphenyl)acetyl-CoA + 4 CO2 + 3 CoA + H2O. The protein operates within antibiotic biosynthesis. Involved in the biosynthesis of the nonproteinogenic amino acid monomer (S)-3,5-dihydroxyphenylglycine (Dpg) responsible of the production of balhimycin antibiotic. Catalyzes the Claisen condensation of four molecules of malonyl-CoA to yield 3,5-dihydroxyphenylacetyl-CoA (DPA-CoA) and three free coenzyme A (CoA). DpgA requires the presence of the dehydratases DpgB and DpgD to facilitate the aromatization of the DPA-S-DgpA or DPA-S-CoA intermediate. The protein is 3,5-dihydroxyphenylacetyl-CoA synthase of Amycolatopsis balhimycina.